The chain runs to 130 residues: Small ribosomal subunit protein uS9 (130 aa).

Belongs to the universal ribosomal protein uS9 family.

The protein is Small ribosomal subunit protein uS9 of Onion yellows phytoplasma (strain OY-M).